A 1240-amino-acid chain; its full sequence is Protein MMS22-like (1240 aa).

Over residues 1–11 the composition is skewed to polar residues; it reads MESEFSQSLTP. The interval 1 to 26 is disordered; it reads MESEFSQSLTPPVSPSALNHYGESAP.

This sequence belongs to the MMS22 family. MMS22L subfamily. Component of the MMS22L-TONSL complex.

The protein resides in the nucleus. Its subcellular location is the chromosome. Functionally, component of the MMS22L-TONSL complex, a complex that promotes homologous recombination-mediated repair of double-strand breaks (DSBs) at stalled or collapsed replication forks. The MMS22L-TONSL complex is required to maintain genome integrity during DNA replication. It mediates the assembly of RAD51 filaments on single-stranded DNA (ssDNA): the MMS22L-TONSL complex is recruited to DSBs following histone replacement by histone chaperones and eviction of the replication protein A complex (RPA/RP-A) from DSBs. Following recruitment to DSBs, the TONSL-MMS22L complex promotes recruitment of RAD51 filaments and subsequent homologous recombination. Within the complex, MMS22L acts by binding ssDNA. In Danio rerio (Zebrafish), this protein is Protein MMS22-like (mms22l).